A 578-amino-acid chain; its full sequence is Proline--tRNA ligase (578 aa).

This sequence belongs to the class-II aminoacyl-tRNA synthetase family. ProS type 1 subfamily. As to quaternary structure, homodimer.

It localises to the cytoplasm. The catalysed reaction is tRNA(Pro) + L-proline + ATP = L-prolyl-tRNA(Pro) + AMP + diphosphate. Functionally, catalyzes the attachment of proline to tRNA(Pro) in a two-step reaction: proline is first activated by ATP to form Pro-AMP and then transferred to the acceptor end of tRNA(Pro). As ProRS can inadvertently accommodate and process non-cognate amino acids such as alanine and cysteine, to avoid such errors it has two additional distinct editing activities against alanine. One activity is designated as 'pretransfer' editing and involves the tRNA(Pro)-independent hydrolysis of activated Ala-AMP. The other activity is designated 'posttransfer' editing and involves deacylation of mischarged Ala-tRNA(Pro). The misacylated Cys-tRNA(Pro) is not edited by ProRS. This chain is Proline--tRNA ligase, found in Burkholderia ambifaria (strain ATCC BAA-244 / DSM 16087 / CCUG 44356 / LMG 19182 / AMMD) (Burkholderia cepacia (strain AMMD)).